Consider the following 424-residue polypeptide: Envelope glycoprotein M (424 aa).

The Intravirion segment spans residues 1 to 23; sequence MASRARMERNYRGLSHIDYVHKK. A helical membrane pass occupies residues 24-44; that stretch reads MWVVQAVCFGIAVLVFFGTLV. The Virion surface segment spans residues 45 to 94; the sequence is AASINLTEGFPCFFAAVVDYRTVNTTLVHTGLTYPRLGGVVPVLFFQTKA. A helical transmembrane segment spans residues 95 to 115; the sequence is VVFFFYATSIVFVFLVCYITV. Over 116–143 the chain is Intravirion; it reads GAIISSKKHVGAAYMGSGAFVFSLMASP. The helical transmembrane segment at 144–164 threads the bilayer; it reads LTILLGTVSIWLLQAVVIVLA. Topologically, residues 165–166 are virion surface; it reads HK. A helical membrane pass occupies residues 167 to 187; sequence LIVLAAAVYLVHFSTITFFYG. Residues 188–226 are Intravirion-facing; sequence YFCGRGVDSKVYAEDISSAKDIDGSLHKLIGNVRAMMVN. Residues 227 to 247 traverse the membrane as a helical segment; that stretch reads LLSIVYSIILIMSSLMFGMLL. Residues 248 to 261 are Virion surface-facing; that stretch reads ANSFTLKFWHVIVT. The helical transmembrane segment at 262–282 threads the bilayer; it reads VLITTSVLTLIYLLVIEFLIA. Arg-283 is a topological domain (intravirion). Residues 284–304 traverse the membrane as a helical segment; sequence YVHIILGAYIGLLIGYGMLWT. Residues 305 to 327 are Virion surface-facing; the sequence is TTCDYVNRFYYAMGANASNLRIA. A helical membrane pass occupies residues 328–348; it reads CHSVLAVFTVLILLAMVVRLI. Residues 349 to 424 are Intravirion-facing; sequence RASLYHRRRS…YSGSESEWDD (76 aa). The segment at 382-424 is disordered; the sequence is SYKQRGSQSEDERALTQSRSAEASDEDTIYDRVYSGSESEWDD.

The protein belongs to the herpesviridae glycoprotein M family. Interacts (via N-terminus) with gN (via N-terminus). The gM-gN heterodimer forms the gCII complex.

Its subcellular location is the virion membrane. The protein localises to the host Golgi apparatus. It is found in the host trans-Golgi network. The protein resides in the host endosome membrane. It localises to the host nucleus inner membrane. Functionally, envelope glycoprotein important for virion assembly and egress. Plays a role in the correct incorporation of gH-gL into virion membrane. Directs the glycoprotein N (gN) to the host trans-Golgi network. In Gallid herpesvirus 2 (strain Chicken/Md5/ATCC VR-987) (GaHV-2), this protein is Envelope glycoprotein M.